Consider the following 263-residue polypeptide: Transcription factor 19-like protein (263 aa).

The FHA domain maps to 31 to 88 (YGLGCRADLCDVALRPQQEPGLISGVHAELHAELQGDDWRVSLEDHSSQGTLVNNVRL). Ser78 is subject to Phosphoserine. Disordered regions lie at residues 140–164 (SKGEAGGGFQPMLPPQGAPQRPLST) and 189–225 (LTFSRGGGRPQGLAIPSQHGEAQVSPAPPTRNRRKSA).

It localises to the nucleus. Its function is as follows. Potential transcription factor that may play a role in the regulation of genes involved in cell cycle G1/S transition. May bind to regulatory elements of genes, including the promoter of the transcription factor FOXO1. This Mus musculus (Mouse) protein is Transcription factor 19-like protein (Tcf19).